Consider the following 202-residue polypeptide: LexA repressor (202 aa).

Positions 28 to 48 (RAEIAQQLGFRSPNAAEEHLK) form a DNA-binding region, H-T-H motif. Catalysis depends on for autocatalytic cleavage activity residues Ser119 and Lys156.

Belongs to the peptidase S24 family. Homodimer.

It carries out the reaction Hydrolysis of Ala-|-Gly bond in repressor LexA.. Functionally, represses a number of genes involved in the response to DNA damage (SOS response), including recA and lexA. Binds to the 16 bp palindromic sequence 5'-CTGTATATATATACAG-3'. In the presence of single-stranded DNA, RecA interacts with LexA causing an autocatalytic cleavage which disrupts the DNA-binding part of LexA, leading to derepression of the SOS regulon and eventually DNA repair. In Pectobacterium carotovorum subsp. carotovorum (Erwinia carotovora subsp. carotovora), this protein is LexA repressor.